Consider the following 246-residue polypeptide: Protein-lysine N-methyltransferase EFM6 (246 aa).

S-adenosyl-L-methionine-binding positions include tryptophan 51, 87 to 89 (GSG), aspartate 115, tryptophan 143, and alanine 169.

This sequence belongs to the class I-like SAM-binding methyltransferase superfamily. METTL21 family. EFM6 subfamily.

It is found in the cytoplasm. Functionally, S-adenosyl-L-methionine-dependent protein-lysine N-methyltransferase that methylates elongation factor 1-alpha (TEF1 and TEF2) at 'Lys-390'. The chain is Protein-lysine N-methyltransferase EFM6 from Saccharomyces cerevisiae (strain ATCC 204508 / S288c) (Baker's yeast).